Here is a 618-residue protein sequence, read N- to C-terminus: MQMKPRQDKKNQEIFRISCQRCRQRKIKCDRLHPCFQCVKSNSQCFYPEDPIRRRAPKEYVEALERQIAFFEAFVKKLAKVGSDEQSLMIQDMNNKIVNEGNEYDQTPDISARKRRKHFRMLPQNNFRYFQFYGTTNVISASNLTTTSEIPTFKFPIFSKRKYNDTENLYEQPFHLEFDTCQELLSLFFLKQYHNFMFVFRDYFIRDFELGGGPYYSQWLLFAICSIGAMISPDDDLKNLSNTLANIAEKWVLDEGLNSPDITTLQTLLVLGIREIGRGLTFKGWLFSGMAFRLVYDMGLHLDPDHWDHSEESRIDREVRRRCFWGCFTLDKLISLCYGRPPGLYLKQTDVRNTTQLPYISELDEPFEIFNKKSELFAAVSAGEDRRGLVQFWLNQVELCKIIHRMLTEVFEDRTSSVLEASINNIHTELQKWIADIPMELQWNTRSQKETSSTVLLLHMLYHSVIIILNRPSDDNYLKLDNTERYTFEICWKSAKTIVQLLKIYFKKYDADCLPMTFIHIATSAARIILVKLNENIPEDGDVCNIYLEIITNALDVCANVWPLASQASRAILNAYKSCATSPKENNEDSLPLQRSPSLDDVSRFDSLDYIFSPNVKY.

The zn(2)-C6 fungal-type DNA-binding region spans 18–47; sequence SCQRCRQRKIKCDRLHPCFQCVKSNSQCFY. Residue Ser-598 is modified to Phosphoserine.

It localises to the nucleus. This is an uncharacterized protein from Schizosaccharomyces pombe (strain 972 / ATCC 24843) (Fission yeast).